A 321-amino-acid polypeptide reads, in one-letter code: N-acetyllactosaminide alpha-1,3-galactosyltransferase-like 1 (321 aa).

Over 1–6 the chain is Cytoplasmic; it reads MQYKKE. Residues 7–24 form a helical; Signal-anchor for type II membrane protein membrane-spanning segment; it reads TLLLILLAILLALTQRYS. The Lumenal segment spans residues 25 to 321; that stretch reads RTKDHLQKMY…IKVAWQPRIT (297 aa). Residues Asn87 and Asn99 are each glycosylated (N-linked (GlcNAc...) asparagine). Residues 95-100, 187-189, and 209-212 each bind substrate; these read FATGNF, TAN, and HAWW. Glu277 serves as the catalytic Nucleophile.

The protein belongs to the glycosyltransferase 6 family. Mn(2+) serves as cofactor.

Its subcellular location is the golgi apparatus. The protein localises to the golgi stack membrane. It carries out the reaction a beta-D-galactosyl-(1-&gt;4)-N-acetyl-beta-D-glucosaminyl derivative + UDP-alpha-D-galactose = an alpha-D-galactosyl-(1-&gt;3)-beta-D-galactosyl-(1-&gt;4)-N-acetyl-beta-D-glucosaminyl derivative + UDP + H(+). Its pathway is protein modification; protein glycosylation. Synthesizes the galactose-alpha(1,3)-galactose group by catalyzing the transfer of a galactose residue, with an alpha-1,3 linkage, on terminal lactosaminide (Gal-beta-1,4-GlcNAc-R) disaccharide borne by a glycoprotein or a glycolipid. In Rattus norvegicus (Rat), this protein is N-acetyllactosaminide alpha-1,3-galactosyltransferase-like 1 (Ggta1l1).